Consider the following 208-residue polypeptide: Protein-L-isoaspartate O-methyltransferase (208 aa).

S59 is a catalytic residue.

This sequence belongs to the methyltransferase superfamily. L-isoaspartyl/D-aspartyl protein methyltransferase family. Monomer.

It localises to the cytoplasm. The enzyme catalyses [protein]-L-isoaspartate + S-adenosyl-L-methionine = [protein]-L-isoaspartate alpha-methyl ester + S-adenosyl-L-homocysteine. Functionally, catalyzes the methyl esterification of L-isoaspartyl residues in peptides and proteins that result from spontaneous decomposition of normal L-aspartyl and L-asparaginyl residues. It plays a role in the repair and/or degradation of damaged proteins. This is Protein-L-isoaspartate O-methyltransferase (pcm) from Shigella flexneri.